Consider the following 347-residue polypeptide: Fructose-1,6-bisphosphatase (347 aa).

Residues 19–23 and 44–48 each bind AMP; these read ILQEQ and SGELS. Mg(2+) is bound by residues Asp85 and Glu114. 127–128 contacts AMP; that stretch reads SY. Positions 133, 135, and 136 each coordinate Mg(2+). 136 to 139 lines the substrate pocket; that stretch reads DGSS. Lys155 is an AMP binding site. Substrate-binding positions include 227 to 230, 258 to 263, Tyr279, and 288 to 290; these read NEGY, RYIGSM, and KLR. Glu294 contributes to the Mg(2+) binding site.

The protein belongs to the FBPase class 1 family. In terms of assembly, homotetramer. It depends on Mg(2+) as a cofactor.

It catalyses the reaction beta-D-fructose 1,6-bisphosphate + H2O = beta-D-fructose 6-phosphate + phosphate. It participates in carbohydrate biosynthesis; gluconeogenesis. Its activity is regulated as follows. Subject to complex allosteric regulation. The enzyme can assume an active R-state, or an inactive T-state. Intermediate conformations may exist. AMP acts as allosteric inhibitor. AMP binding affects the turnover of bound substrate and not the affinity for substrate. This is Fructose-1,6-bisphosphatase (fbp1) from Schizosaccharomyces pombe (strain 972 / ATCC 24843) (Fission yeast).